A 730-amino-acid polypeptide reads, in one-letter code: Polyribonucleotide nucleotidyltransferase (730 aa).

The Mg(2+) site is built by D489 and D495. The region spanning 556–615 (PRIEVMKIAVDKIREVIGSGGKVIREIVEKTGAKINIEDDGTIKIASASGDAIKAAINWI) is the KH domain. The S1 motif domain occupies 625 to 693 (GQIYEGTVVK…ERGKTRLSMK (69 aa)). The segment at 700 to 730 (GEDLEAKAKAERDAARAAAPAATGDEAGAAE) is disordered. A compositionally biased stretch (basic and acidic residues) spans 703 to 714 (LEAKAKAERDAA). The segment covering 715–730 (RAAAPAATGDEAGAAE) has biased composition (low complexity).

Belongs to the polyribonucleotide nucleotidyltransferase family. Mg(2+) serves as cofactor.

It localises to the cytoplasm. It catalyses the reaction RNA(n+1) + phosphate = RNA(n) + a ribonucleoside 5'-diphosphate. Its function is as follows. Involved in mRNA degradation. Catalyzes the phosphorolysis of single-stranded polyribonucleotides processively in the 3'- to 5'-direction. In Xanthobacter autotrophicus (strain ATCC BAA-1158 / Py2), this protein is Polyribonucleotide nucleotidyltransferase.